The primary structure comprises 422 residues: Glutamate-1-semialdehyde 2,1-aminomutase (422 aa).

Lysine 258 is modified (N6-(pyridoxal phosphate)lysine).

Belongs to the class-III pyridoxal-phosphate-dependent aminotransferase family. HemL subfamily. As to quaternary structure, homodimer. The cofactor is pyridoxal 5'-phosphate.

It is found in the cytoplasm. It catalyses the reaction (S)-4-amino-5-oxopentanoate = 5-aminolevulinate. It participates in porphyrin-containing compound metabolism; protoporphyrin-IX biosynthesis; 5-aminolevulinate from L-glutamyl-tRNA(Glu): step 2/2. The protein is Glutamate-1-semialdehyde 2,1-aminomutase of Chlamydia muridarum (strain MoPn / Nigg).